The primary structure comprises 308 residues: 4-diphosphocytidyl-2-C-methyl-D-erythritol kinase (308 aa).

Residue Lys-24 is part of the active site. Pro-118 to Ala-128 is a binding site for ATP. Asp-160 is an active-site residue.

It belongs to the GHMP kinase family. IspE subfamily.

It carries out the reaction 4-CDP-2-C-methyl-D-erythritol + ATP = 4-CDP-2-C-methyl-D-erythritol 2-phosphate + ADP + H(+). The protein operates within isoprenoid biosynthesis; isopentenyl diphosphate biosynthesis via DXP pathway; isopentenyl diphosphate from 1-deoxy-D-xylulose 5-phosphate: step 3/6. In terms of biological role, catalyzes the phosphorylation of the position 2 hydroxy group of 4-diphosphocytidyl-2C-methyl-D-erythritol. The chain is 4-diphosphocytidyl-2-C-methyl-D-erythritol kinase from Bifidobacterium adolescentis (strain ATCC 15703 / DSM 20083 / NCTC 11814 / E194a).